The following is a 150-amino-acid chain: Globin-3 (150 aa).

The Globin domain occupies 11–150; sequence PLSAAEKTKI…MICILLRSAY (140 aa). Residues His74 and His106 each coordinate heme b.

This sequence belongs to the globin family. In terms of assembly, monomer.

In Petromyzon marinus (Sea lamprey), this protein is Globin-3.